The following is a 227-amino-acid chain: N-acetyltransferase family 8 member 7 (227 aa).

2 consecutive transmembrane segments (helical) span residues 36–56 (MLLLPRTLLLLLGVPLTLFLA) and 58–78 (GSWLLVLLSILTLFLSLWFLA). The 160-residue stretch at 61–220 (LLVLLSILTL…PMINLKYSLT (160 aa)) folds into the N-acetyltransferase domain.

The protein belongs to the camello family.

It localises to the membrane. It carries out the reaction L-lysyl-[protein] + acetyl-CoA = N(6)-acetyl-L-lysyl-[protein] + CoA + H(+). Has histone acetyltransferase activity in vitro, with specificity for histone H4. The polypeptide is N-acetyltransferase family 8 member 7 (Mus musculus (Mouse)).